A 251-amino-acid chain; its full sequence is Segregation and condensation protein A (251 aa).

Belongs to the ScpA family. As to quaternary structure, component of a cohesin-like complex composed of ScpA, ScpB and the Smc homodimer, in which ScpA and ScpB bind to the head domain of Smc. The presence of the three proteins is required for the association of the complex with DNA.

Its subcellular location is the cytoplasm. Its function is as follows. Participates in chromosomal partition during cell division. May act via the formation of a condensin-like complex containing Smc and ScpB that pull DNA away from mid-cell into both cell halves. The sequence is that of Segregation and condensation protein A from Exiguobacterium sibiricum (strain DSM 17290 / CCUG 55495 / CIP 109462 / JCM 13490 / 255-15).